A 420-amino-acid polypeptide reads, in one-letter code: MGGGGMFEEIGCFDPNAPAEMTAESSFSPSEPPPTITVIGSNSNSNCSLEDLSAFHLSPQDSSLPASASAYAHQLHINATPNCDHQFQSSMHQTLQDPSYAQQSNHWDNGYQDFVNLGPNHTTPDLLSLLQLPRSSLPPFANPSIQDIIMTTSSSVAAYDPLFHLNFPLQPPNGSFMGVDQDQTETNQGVNLMYDEENNNLDDGLNRKGRGSKKRKIFPTERERRVHFKDRFGDLKNLIPNPTKNDRASIVGEAIDYIKELLRTIDEFKLLVEKKRVKQRNREGDDVVDENFKAQSEVVEQCLINKKNNALRCSWLKRKSKFTDVDVRIIDDEVTIKIVQKKKINCLLFVSKVVDQLELDLHHVAGAQIGEHHSFLFNAKISEGSSVYASAIADRVMEVLKKQYMEALSANNGYHCYSSD.

The disordered stretch occupies residues 196 to 216 (EENNNLDDGLNRKGRGSKKRK). Basic residues predominate over residues 207–216 (RKGRGSKKRK). Positions 212–261 (SKKRKIFPTERERRVHFKDRFGDLKNLIPNPTKNDRASIVGEAIDYIKEL) constitute a bHLH domain.

Homodimer. In terms of tissue distribution, flowers.

The protein localises to the nucleus. The sequence is that of Transcription factor bHLH89 (BHLH89) from Arabidopsis thaliana (Mouse-ear cress).